The chain runs to 219 residues: 7-carboxy-7-deazaguanine synthase (219 aa).

Residues 12–14 (IQG) and Arg27 each bind substrate. The Radical SAM core domain occupies 18 to 219 (YTGTPSIFIR…VQIHKYLKIR (202 aa)). [4Fe-4S] cluster contacts are provided by Cys31, Cys35, and Cys38. Residue Thr40 coordinates Mg(2+). Thr92 contacts substrate. Residues Gly94 and 136 to 138 (SPK) each bind S-adenosyl-L-methionine.

It belongs to the radical SAM superfamily. 7-carboxy-7-deazaguanine synthase family. As to quaternary structure, homodimer. [4Fe-4S] cluster serves as cofactor. S-adenosyl-L-methionine is required as a cofactor. Requires Mg(2+) as cofactor.

The enzyme catalyses 6-carboxy-5,6,7,8-tetrahydropterin + H(+) = 7-carboxy-7-deazaguanine + NH4(+). It functions in the pathway purine metabolism; 7-cyano-7-deazaguanine biosynthesis. Catalyzes the complex heterocyclic radical-mediated conversion of 6-carboxy-5,6,7,8-tetrahydropterin (CPH4) to 7-carboxy-7-deazaguanine (CDG), a step common to the biosynthetic pathways of all 7-deazapurine-containing compounds. The chain is 7-carboxy-7-deazaguanine synthase from Buchnera aphidicola subsp. Schizaphis graminum (strain Sg).